We begin with the raw amino-acid sequence, 297 residues long: 4-hydroxy-tetrahydrodipicolinate synthase (297 aa).

Position 46 (Thr-46) interacts with pyruvate. Tyr-134 serves as the catalytic Proton donor/acceptor. The Schiff-base intermediate with substrate role is filled by Lys-162. Ile-209 contacts pyruvate.

The protein belongs to the DapA family. Homotetramer; dimer of dimers.

It is found in the cytoplasm. The catalysed reaction is L-aspartate 4-semialdehyde + pyruvate = (2S,4S)-4-hydroxy-2,3,4,5-tetrahydrodipicolinate + H2O + H(+). It functions in the pathway amino-acid biosynthesis; L-lysine biosynthesis via DAP pathway; (S)-tetrahydrodipicolinate from L-aspartate: step 3/4. Functionally, catalyzes the condensation of (S)-aspartate-beta-semialdehyde [(S)-ASA] and pyruvate to 4-hydroxy-tetrahydrodipicolinate (HTPA). This is 4-hydroxy-tetrahydrodipicolinate synthase from Methanosphaera stadtmanae (strain ATCC 43021 / DSM 3091 / JCM 11832 / MCB-3).